The chain runs to 298 residues: ATP phosphoribosyltransferase (298 aa).

The protein belongs to the ATP phosphoribosyltransferase family. Long subfamily. Mg(2+) serves as cofactor.

Its subcellular location is the cytoplasm. The catalysed reaction is 1-(5-phospho-beta-D-ribosyl)-ATP + diphosphate = 5-phospho-alpha-D-ribose 1-diphosphate + ATP. Its pathway is amino-acid biosynthesis; L-histidine biosynthesis; L-histidine from 5-phospho-alpha-D-ribose 1-diphosphate: step 1/9. Feedback inhibited by histidine. In terms of biological role, catalyzes the condensation of ATP and 5-phosphoribose 1-diphosphate to form N'-(5'-phosphoribosyl)-ATP (PR-ATP). Has a crucial role in the pathway because the rate of histidine biosynthesis seems to be controlled primarily by regulation of HisG enzymatic activity. This chain is ATP phosphoribosyltransferase, found in Aliivibrio salmonicida (strain LFI1238) (Vibrio salmonicida (strain LFI1238)).